Consider the following 32-residue polypeptide: Protamine-1 (32 aa).

The tract at residues 1 to 32 is disordered; the sequence is PRRRRASSGRPVRRRRRPKMSRRRRRGGRRRR.

As to expression, testis.

Its subcellular location is the nucleus. The protein resides in the chromosome. Its function is as follows. Protamines substitute for histones in the chromatin of sperm during the haploid phase of spermatogenesis. They compact sperm DNA into a highly condensed, stable and inactive complex. The polypeptide is Protamine-1 (Esox lucius (Northern pike)).